The chain runs to 646 residues: RNA-binding protein RMD9, mitochondrial (646 aa).

The transit peptide at M1–M14 directs the protein to the mitochondrion. The propeptide at E15–H51 is removed in mature form. A PPR1 repeat occupies V209 to K238. A PPR2 repeat occupies E251–S282. A PPR3 repeat occupies P288–K317. The PPR4 repeat unit spans residues Y323–D353. One copy of the PPR5 repeat lies at V363–Y394. A PPR6 repeat occupies G401–V439. One copy of the PPR7 repeat lies at E444–Y473. The PPR8 repeat unit spans residues S481–L514.

It belongs to the RMD9 family. Monomer. Phosphorylated. Phosphorylation promotes binding to RNA.

The protein localises to the mitochondrion inner membrane. Functionally, binds the RNA motif 5'-AAUAA[U/C]AUUCUU-3' in the 3'-UTR of mitochondrial mRNAs. Involved in the processing or stability of mitochondrial mRNAs. In Saccharomyces cerevisiae (strain ATCC 204508 / S288c) (Baker's yeast), this protein is RNA-binding protein RMD9, mitochondrial.